A 390-amino-acid chain; its full sequence is uncharacterized protein (390 aa).

The protein belongs to the arsA ATPase family.

This is an uncharacterized protein from Streptomyces coelicolor (strain ATCC BAA-471 / A3(2) / M145).